A 715-amino-acid polypeptide reads, in one-letter code: Fatty acid oxidation complex subunit alpha (715 aa).

Positions 1 to 189 (MIYQGETLTV…KVGAIDAVVA (189 aa)) are enoyl-CoA hydratase/isomerase. Asp-296 is a substrate binding site. A 3-hydroxyacyl-CoA dehydrogenase region spans residues 311–715 (AKATSHAAVL…EMAAQGKTFY (405 aa)). NAD(+) is bound by residues Met-325, Asp-344, 401–403 (VVE), Lys-408, and Ser-430. His-451 functions as the For 3-hydroxyacyl-CoA dehydrogenase activity in the catalytic mechanism. Asn-454 contributes to the NAD(+) binding site. Residues Asn-501 and Tyr-661 each contribute to the substrate site.

It in the N-terminal section; belongs to the enoyl-CoA hydratase/isomerase family. In the C-terminal section; belongs to the 3-hydroxyacyl-CoA dehydrogenase family. In terms of assembly, heterotetramer of two alpha chains (FadB) and two beta chains (FadA).

The enzyme catalyses a (3S)-3-hydroxyacyl-CoA + NAD(+) = a 3-oxoacyl-CoA + NADH + H(+). It carries out the reaction a (3S)-3-hydroxyacyl-CoA = a (2E)-enoyl-CoA + H2O. It catalyses the reaction a 4-saturated-(3S)-3-hydroxyacyl-CoA = a (3E)-enoyl-CoA + H2O. The catalysed reaction is (3S)-3-hydroxybutanoyl-CoA = (3R)-3-hydroxybutanoyl-CoA. The enzyme catalyses a (3Z)-enoyl-CoA = a 4-saturated (2E)-enoyl-CoA. It carries out the reaction a (3E)-enoyl-CoA = a 4-saturated (2E)-enoyl-CoA. It participates in lipid metabolism; fatty acid beta-oxidation. Functionally, involved in the aerobic and anaerobic degradation of long-chain fatty acids via beta-oxidation cycle. Catalyzes the formation of 3-oxoacyl-CoA from enoyl-CoA via L-3-hydroxyacyl-CoA. It can also use D-3-hydroxyacyl-CoA and cis-3-enoyl-CoA as substrate. In Aeromonas hydrophila subsp. hydrophila (strain ATCC 7966 / DSM 30187 / BCRC 13018 / CCUG 14551 / JCM 1027 / KCTC 2358 / NCIMB 9240 / NCTC 8049), this protein is Fatty acid oxidation complex subunit alpha.